Here is an 841-residue protein sequence, read N- to C-terminus: Formin-like protein 10 (841 aa).

An N-terminal signal peptide occupies residues 1–25 (MDGLCYVIFIIFSLLSCAFSPLSYA). A helical membrane pass occupies residues 102-122 (LIPAISAVLAAATLIALAFFF). Disordered stretches follow at residues 137 to 166 (SKSL…QNKL), 254 to 297 (ISSH…RTVR), and 403 to 512 (KSSW…SKQR). Residues 139 to 152 (SLASDISQSQQQTL) are compositionally biased toward polar residues. Residues 254 to 278 (ISSHSDSPAMSPSAAMSPPMNSTAP) are compositionally biased toward low complexity. The span at 279 to 293 (HWSTNQNTHSPSSPE) shows a compositional bias: polar residues. Over residues 426 to 444 (LPPPQRPPPAMPEPPPLVP) the composition is skewed to pro residues. Positions 469–841 (EGTTDRPKPK…KKMEVTSSLA (373 aa)) constitute an FH2 domain. Polar residues predominate over residues 502 to 512 (YNSSNANSKQR).

The protein belongs to the formin-like family. Class-I subfamily.

The protein localises to the membrane. In terms of biological role, might be involved in the organization and polarity of the actin cytoskeleton. This is Formin-like protein 10 (FH10) from Arabidopsis thaliana (Mouse-ear cress).